The following is a 153-amino-acid chain: Ribosome maturation factor RimP (153 aa).

It belongs to the RimP family.

It localises to the cytoplasm. In terms of biological role, required for maturation of 30S ribosomal subunits. The polypeptide is Ribosome maturation factor RimP (Desulforamulus reducens (strain ATCC BAA-1160 / DSM 100696 / MI-1) (Desulfotomaculum reducens)).